Here is a 625-residue protein sequence, read N- to C-terminus: Probable potassium transport system protein Kup (625 aa).

12 helical membrane-spanning segments follow: residues 10 to 30, 50 to 70, 102 to 122, 142 to 162, 172 to 192, 215 to 235, 250 to 270, 284 to 304, 340 to 360, 369 to 389, 397 to 417, and 422 to 442; these read LAAL…TSPL, LLGV…LKYV, YFPL…DSVI, FDPY…SVQA, FGPI…VNII, FLAF…EALY, WFLV…ALLL, LGAW…IIAS, IYIP…VVGF, AYGI…FFVI, LLLC…LFSA, and LFHG…LMLT.

The protein belongs to the HAK/KUP transporter (TC 2.A.72) family.

It is found in the cell inner membrane. The enzyme catalyses K(+)(in) + H(+)(in) = K(+)(out) + H(+)(out). Its function is as follows. Transport of potassium into the cell. Likely operates as a K(+):H(+) symporter. This is Probable potassium transport system protein Kup from Janthinobacterium sp. (strain Marseille) (Minibacterium massiliensis).